Reading from the N-terminus, the 933-residue chain is Progesterone receptor (933 aa).

A disordered region spans residues 1-48; sequence MTELKAKGPRAPHVAGGPPSPEVGSPLLCRPAAGPFEGSQTSDTLPEV. The tract at residues 1–164 is AF3; mediates transcriptional activation; the sequence is MTELKAKGPR…PATQRVLSPL (164 aa). The segment at 1–566 is modulating, Pro-Rich; that stretch reads MTELKAKGPR…YSFESLPQKI (566 aa). Serine 20 bears the Phosphoserine mark. The short motif at 55–59 is the LXXL motif 1 element; it reads LDGLL. Residues 66–255 are disordered; sequence GQDLPDEKTQ…GAAAGGGAAA (190 aa). Serine 81 carries the post-translational modification Phosphoserine. Residues 115 to 119 carry the LXXL motif 2 motif; it reads LDTLL. Serine 130 and serine 162 each carry phosphoserine. The mediates transcriptional transrepression stretch occupies residues 165–305; it reads MSRSGGKTGD…LATTMMDFIH (141 aa). Residues 183–187 carry the Nuclear localization signal motif; sequence KVLPR. 2 positions are modified to phosphoserine: serine 190 and serine 213. Phosphoserine; by MAPK1 is present on serine 294. The tract at residues 331–378 is disordered; it reads GGAGAASAFAPPQSSPSASSTPVAVGDFPDCAYPPDAEPKDNAYPLYG. Residues 335–350 show a composition bias toward low complexity; that stretch reads AASAFAPPQSSPSASS. Serine 345 carries the phosphoserine; by MAPK modification. Lysine 388 participates in a covalent cross-link: Glycyl lysine isopeptide (Lys-Gly) (interchain with G-Cter in SUMO); alternate. A Glycyl lysine isopeptide (Lys-Gly) (interchain with G-Cter in ubiquitin); alternate cross-link involves residue lysine 388. At serine 400 the chain carries Phosphoserine; by CDK2. A disordered region spans residues 415 to 454; sequence PDYPLGPPPQLPPRAPPSRPGEAAVTAAPASASVSSASSP. Positions 418-433 are enriched in pro residues; sequence PLGPPPQLPPRAPPSR. The span at 437–454 shows a compositional bias: low complexity; it reads AAVTAAPASASVSSASSP. Positions 456-546 are AF1; mediates transcriptional activation; sequence STLECILYKA…VYPPYLNYLR (91 aa). A Glycyl lysine isopeptide (Lys-Gly) (interchain with G-Cter in SUMO) cross-link involves residue lysine 531. 2 consecutive NR C4-type zinc fingers follow at residues 567–587 and 603–627; these read CLIC…CGSC and CAGR…LRKC. The nuclear receptor DNA-binding region spans 567 to 639; it reads CLICGDEASG…AGMVLGGRKF (73 aa). Serine 676 carries the phosphoserine modification. The region spanning 679 to 913 is the NR LBD domain; the sequence is QDIQLIPPLI…EFPEMMSEVI (235 aa). An AF2; mediates transcriptional activation region spans residues 687–933; the sequence is LIKLLMSIEP…MVKPLLFHKK (247 aa).

Belongs to the nuclear hormone receptor family. Interacts with SMARD1 and UNC45A. Interacts with CUEDC2; the interaction promotes ubiquitination, decreases sumoylation, and represses transcriptional activity. Interacts with PIAS3; the interaction promotes sumoylation of PR in a hormone-dependent manner, inhibits DNA-binding, and alters nuclear export. Interacts with SP1; the interaction requires ligand-induced phosphorylation on Ser-345 by ERK1/2-MAPK. Interacts with PRMT2. Interacts with NCOA2 and NCOA1. Interacts with KLF9. Interacts with GTF2B. In terms of processing, phosphorylated on multiple serine sites. Several of these sites are hormone-dependent. Phosphorylation on Ser-294 is highly hormone-dependent and modulates ubiquitination and sumoylation on Lys-388. Phosphorylation on Ser-345 also requires induction by hormone. Basal phosphorylation on Ser-81, Ser-162, Ser-190 and Ser-400 is increased in response to progesterone and can be phosphorylated in vitro by the CDK2-A1 complex. Increased levels of phosphorylation on Ser-400 also in the presence of EGF, heregulin, IGF, PMA and FBS. Phosphorylation at this site by CDK2 is ligand-independent, and increases nuclear translocation and transcriptional activity. Phosphorylation at Ser-162 and Ser-294, but not at Ser-190, is impaired during the G(2)/M phase of the cell cycle. Phosphorylation on Ser-345 by ERK1/2 MAPK is required for interaction with SP1. Sumoylation is hormone-dependent and represses transcriptional activity. Sumoylation on all three sites is enhanced by PIAS3. Desumoylated by SENP1. Sumoylation on Lys-388, the main site of sumoylation, is repressed by ubiquitination on the same site, and modulated by phosphorylation at Ser-294. Post-translationally, ubiquitination is hormone-dependent and represses sumoylation on the same site. Promoted by MAPK-mediated phosphorylation on Ser-294. In terms of processing, palmitoylated by ZDHHC7 and ZDHHC21. Palmitoylation is required for plasma membrane targeting and for rapid intracellular signaling via ERK and AKT kinases and cAMP generation.

It localises to the nucleus. The protein localises to the cytoplasm. Its function is as follows. The steroid hormones and their receptors are involved in the regulation of eukaryotic gene expression and affect cellular proliferation and differentiation in target tissues. Transcriptional activator of several progesteron-dependent promoters in a variety of cell types. Involved in activation of SRC-dependent MAPK signaling on hormone stimulation. The protein is Progesterone receptor (PGR) of Trachypithecus obscurus (Dusky leaf-monkey).